An 863-amino-acid chain; its full sequence is Axin-1 (863 aa).

The interval 1-81 is disordered; that stretch reads MNVQEQGFPL…PEGSASPTPP (81 aa). Residues 20–29 carry the Tankyrase-binding motif motif; sequence APRPPVPGEE. The segment covering 34–61 has biased composition (polar residues); the sequence is STDSRPVNHSFCSGKGTSIKSETSTATP. The residue at position 75 (S75) is a Phosphoserine. Position 77 is a phosphoserine; by CK1 (S77). In terms of domain architecture, RGS spans 88–211; it reads SLHSLLDDQD…LKSDIYLEYT (124 aa). Residues 209–338 are interaction with TP53; the sequence is EYTRTGSESP…DADTLSLTDS (130 aa). Disordered regions lie at residues 215–240, 249–268, and 315–344; these read SESP…YLPT, CDQD…SRLT, and ATSA…DGIP. S217 is subject to Phosphoserine. Over residues 249 to 258 the composition is skewed to acidic residues; it reads CDQDADEDDG. The segment covering 325–339 has biased composition (low complexity); that stretch reads SLSSDADTLSLTDSS. The segment at 348-432 is interaction with GSK3B; sequence IRKQHRREMQ…EDGEMPSGPM (85 aa). Residues 353–411 form an interaction with SIAH1 region; that stretch reads RREMQESIQVNGRVPLPHIPRTYRMPKEIRVEPQKFAEELIHRLEAVQRTREAEEKLEE. The segment at 433-501 is interaction with beta-catenin; that stretch reads ASHKLPSVPA…SPDSGHVAKT (69 aa). The residue at position 468 (S468) is a Phosphoserine; by CK1. The residue at position 480 (T480) is a Phosphothreonine; by GSK3-beta. Residue S485 is modified to Phosphoserine; by GSK3-beta. Residues S492 and S509 each carry the phosphoserine modification. The tract at residues 505–758 is interaction with RNF111; the sequence is GGTASGHGKH…PVLSVVPAVS (254 aa). Residues 529–542 show a composition bias toward basic residues; sequence HHRHVHHHVHHNSA. Disordered regions lie at residues 529 to 624 and 642 to 664; these read HHRH…DAEK and HRKA…SRPL. The segment covering 543–554 has biased composition (basic and acidic residues); the sequence is RPKEQMEAEVAR. An interaction with PPP2CA region spans residues 572 to 790; the sequence is PRSYSENAGT…CDSIVVAYYF (219 aa). Positions 575–584 are enriched in polar residues; sequence YSENAGTTLS. The tract at residues 678–753 is interaction with HIPK2; sequence AQLRNSVQPS…RPACAPVLSV (76 aa). Residues 781-863 form the DIX domain; that stretch reads CDSIVVAYYF…KIIGKVEKVD (83 aa). Glycyl lysine isopeptide (Lys-Gly) (interchain with G-Cter in SUMO) cross-links involve residues K858 and K861.

As to quaternary structure, homodimer. Component of the beta-catenin destruction complex, containing at least CTNNB1, an axin and GSK3B, that regulates CTNNB1 protein levels through phosphorylation and ubiquitination. Interacts with GSK3B; the interaction hyperphosphorylates CTNNB1 leading to its ubiquitination and destruction. Interacts with DAXX; the interaction stimulates the interaction of DAXX with TP53, stimulates 'Ser-46' phosphorylation of TP53 and induces cell death on UV irradiation. Also interacts with APC, RNF111, SMAD6 and SMAD7. Interacts (via the C-terminal) with PPP1CA; the interaction dephosphorylates AXIN1 and regulates interaction with GSK3B. Interacts with PPP2CA; the interaction dephosphorylates AXIN1. Interacts with MDFI; the interaction decreases AXIN1-mediated JUN N-terminal kinase (JNK) activation. Interacts with MDFIC; the interaction inhibits beta-cateninin-mediated signaling and AXIN1-mediated JUN N-terminal kinase (JNK) activation. Binds ANKRD6, PIAS1, PIAS2, PIAS4, SUMO1, MAP3K1 and MAP3K4. Component of the AXIN1-HIPK2-TP53 complex. Interacts directly in the complex with TP53 and HIPK2. Interacts with DIXDC1; the interaction prevents interaction with MAP3K1. Interacts with AIDA; the interaction blocks the AXIN1-mediated JNK activation through disrupting AXIN1 homodimerization and Wnt signaling. Interacts with LRP5 (via its phosphorylated PPPSP motifs); the interaction is stimulated by WNT1 and GSK3B and activates beta-catenin signaling. Interacts with CTNNB1 (via the armadillo repeats 2-7). Interacts with MACF1. Found in a complex composed of MACF1, APC, AXIN1, CTNNB1 and GSK3B. Interacts with TNKS. Interacts with DAB2; the interaction is mutually exclusive with the AXIN1:PPP1CA interaction. Interacts with ZBED3 (via PPPSP motif); the interaction is direct, enhanced by protein kinase GSK3B and casein kinase CSNK1E activities and decreases GSK3B-induced beta-catenin serine and threonine phosphorylations. Interacts with WDR26. Interacts with GID8. Interacts with SIAH1 and SIAH2; both probably catalyze AXIN1 ubiquitination and subsequent proteasome-mediated ubiquitin-dependent degradation. Interaction with GSK3B and AXIN1 is competitive. In terms of processing, phosphorylation and dephosphorylation of AXIN1 regulates assembly and function of the beta-catenin complex. Phosphorylated by CK1 and GSK3B. Dephosphorylated by PPP1CA and PPP2CA. Phosphorylation by CK1 enhances binding of GSK3B to AXIN1. Also phosphorylated by CDK2 which regulates interaction with CTNBB1. ADP-ribosylated by tankyrase TNKS and TNKS2. Poly-ADP-ribosylated protein is recognized by RNF146, followed by ubiquitination and subsequent activation of the Wnt signaling pathway. Post-translationally, ubiquitinated by RNF146 when poly-ADP-ribosylated, leading to its degradation and subsequent activation of the Wnt signaling pathway. Deubiquitinated by USP34, deubiquitinated downstream of beta-catenin stabilization step: deubiquitination is important for nuclear accumulation during Wnt signaling to positively regulate beta-catenin (CTNBB1)-mediated transcription. Sumoylation at Lys-858 and Lys-861 prevents ubiquitination and degradation. Sumoylation is required for AXIN1-mediated JNK activation. Ubiquitination by SIAH1 and SIAH2 induces its proteasomal degradation as part of the activation of the Wnt signaling pathway. As to expression, expressed in embryonic stem cells.

The protein resides in the cytoplasm. It localises to the nucleus. It is found in the cell membrane. The protein localises to the membrane. Functionally, component of the beta-catenin destruction complex required for regulating CTNNB1 levels through phosphorylation and ubiquitination, and modulating Wnt-signaling. Controls dorsoventral patterning via two opposing effects; down-regulates CTNNB1 to inhibit the Wnt signaling pathway and ventralize embryos, but also dorsalizes embryos by activating a Wnt-independent JNK signaling pathway. In Wnt signaling, probably facilitates the phosphorylation of CTNNB1 and APC by GSK3B. Likely to function as a tumor suppressor. Facilitates the phosphorylation of TP53 by HIPK2 upon ultraviolet irradiation. Enhances TGF-beta signaling by recruiting the RNF111 E3 ubiquitin ligase and promoting the degradation of inhibitory SMAD7. Also a component of the AXIN1-HIPK2-TP53 complex which controls cell growth, apoptosis and development. In Mus musculus (Mouse), this protein is Axin-1 (Axin1).